The primary structure comprises 301 residues: Quinolinate synthase (301 aa).

Iminosuccinate is bound by residues His21 and Ser38. Position 83 (Cys83) interacts with [4Fe-4S] cluster. Residues 109-111 and Ser126 each bind iminosuccinate; that span reads YIN. Cys169 provides a ligand contact to [4Fe-4S] cluster. Residues 195 to 197 and Thr212 contribute to the iminosuccinate site; that span reads HPE. Cys257 is a [4Fe-4S] cluster binding site.

This sequence belongs to the quinolinate synthase family. Type 2 subfamily. It depends on [4Fe-4S] cluster as a cofactor.

It localises to the cytoplasm. It carries out the reaction iminosuccinate + dihydroxyacetone phosphate = quinolinate + phosphate + 2 H2O + H(+). It participates in cofactor biosynthesis; NAD(+) biosynthesis; quinolinate from iminoaspartate: step 1/1. Its function is as follows. Catalyzes the condensation of iminoaspartate with dihydroxyacetone phosphate to form quinolinate. In Clostridium perfringens (strain ATCC 13124 / DSM 756 / JCM 1290 / NCIMB 6125 / NCTC 8237 / Type A), this protein is Quinolinate synthase.